Consider the following 370-residue polypeptide: Cysteine-type anaerobic sulfatase-maturating enzyme (370 aa).

Residues 1–227 form the Radical SAM core domain; it reads MPPLSLLIKP…LKNLFDFWYE (227 aa). 2 residues coordinate [4Fe-4S] cluster: C15 and C19. Y21 provides a ligand contact to S-adenosyl-L-methionine. Residue C22 coordinates [4Fe-4S] cluster. S-adenosyl-L-methionine contacts are provided by G66, S122, R134, and L195. 3 residues coordinate [4Fe-4S] cluster: C255, C261, and C276. Catalysis depends on D277, which acts as the Proton acceptor. Residues C317, C320, C326, C330, and C348 each coordinate [4Fe-4S] cluster.

It belongs to the radical SAM superfamily. Anaerobic sulfatase-maturating enzyme family. In terms of assembly, monomer. [4Fe-4S] cluster is required as a cofactor.

It carries out the reaction L-cysteinyl-[sulfatase] + S-adenosyl-L-methionine + H2O = 3-oxo-L-alanyl-[sulfatase] + hydrogen sulfide + 5'-deoxyadenosine + L-methionine + 2 H(+). It participates in protein modification; sulfatase oxidation. Functionally, involved in 'Cys-type' sulfatase maturation under anaerobic conditions. Catalyzes the post-translational modification of cysteine ('Cys-51' in the arylsulfatase CPF_0221) into 3-oxoalanine (also known as C(alpha)-formylglycine (FGly)), by a free radical chemical mechanism initiated via the reductive cleavage of S-adenosyl-L-methionine (SAM). Is also able to oxidize a serine residue in a synthetic substrate to FGly in vitro, and in a serine variant of a Cys-type sulfatase in vivo, but this activity is not physiological. Converts threonyl peptides to the corresponding ketone product, and also allo-threonyl peptides, but with a significantly reduced efficiency. This Clostridium perfringens (strain ATCC 13124 / DSM 756 / JCM 1290 / NCIMB 6125 / NCTC 8237 / Type A) protein is Cysteine-type anaerobic sulfatase-maturating enzyme.